A 127-amino-acid chain; its full sequence is Large ribosomal subunit protein bL19 (127 aa).

This sequence belongs to the bacterial ribosomal protein bL19 family.

Functionally, this protein is located at the 30S-50S ribosomal subunit interface and may play a role in the structure and function of the aminoacyl-tRNA binding site. The protein is Large ribosomal subunit protein bL19 of Trichodesmium erythraeum (strain IMS101).